The following is a 703-amino-acid chain: Protein FAR1-RELATED SEQUENCE 6 (703 aa).

A disordered region spans residues 1 to 29 (MERSESVDEDVQASAYLENDEVRERDDPM). In terms of domain architecture, FAR1 spans 99-184 (NYYNCYASEV…TLDHNHLLGC (86 aa)). The region spanning 297–392 (VIFIDSSYIS…SLTHIMRKIP (96 aa)) is the MULE domain. The SWIM-type zinc-finger motif lies at 584–620 (FEVLYNRSVGEVRCICSCFNFYGYLCRHALCVLNFNG).

The protein belongs to the FHY3/FAR1 family. Expressed in hypocotyls, rosette and cauline leaves, inflorescences stems, flowers and siliques.

The protein localises to the nucleus. In terms of biological role, putative transcription activator involved in regulating light control of development. May have a role in controlling flowering time. This Arabidopsis thaliana (Mouse-ear cress) protein is Protein FAR1-RELATED SEQUENCE 6 (FRS6).